Consider the following 187-residue polypeptide: Elongation factor P (187 aa).

This sequence belongs to the elongation factor P family.

The protein localises to the cytoplasm. It functions in the pathway protein biosynthesis; polypeptide chain elongation. Involved in peptide bond synthesis. Stimulates efficient translation and peptide-bond synthesis on native or reconstituted 70S ribosomes in vitro. Probably functions indirectly by altering the affinity of the ribosome for aminoacyl-tRNA, thus increasing their reactivity as acceptors for peptidyl transferase. The chain is Elongation factor P from Mycobacterium marinum (strain ATCC BAA-535 / M).